The chain runs to 75 residues: Exodeoxyribonuclease 7 small subunit (75 aa).

This sequence belongs to the XseB family. In terms of assembly, heterooligomer composed of large and small subunits.

It is found in the cytoplasm. The enzyme catalyses Exonucleolytic cleavage in either 5'- to 3'- or 3'- to 5'-direction to yield nucleoside 5'-phosphates.. Bidirectionally degrades single-stranded DNA into large acid-insoluble oligonucleotides, which are then degraded further into small acid-soluble oligonucleotides. The protein is Exodeoxyribonuclease 7 small subunit of Thermotoga maritima (strain ATCC 43589 / DSM 3109 / JCM 10099 / NBRC 100826 / MSB8).